The chain runs to 383 residues: Succinyl-diaminopimelate desuccinylase (383 aa).

His-79 contacts Zn(2+). Asp-81 is an active-site residue. Position 110 (Asp-110) interacts with Zn(2+). Catalysis depends on Glu-141, which acts as the Proton acceptor. The Zn(2+) site is built by Glu-142, Glu-170, and His-355.

Belongs to the peptidase M20A family. DapE subfamily. As to quaternary structure, homodimer. Zn(2+) is required as a cofactor. Requires Co(2+) as cofactor.

It carries out the reaction N-succinyl-(2S,6S)-2,6-diaminopimelate + H2O = (2S,6S)-2,6-diaminopimelate + succinate. It participates in amino-acid biosynthesis; L-lysine biosynthesis via DAP pathway; LL-2,6-diaminopimelate from (S)-tetrahydrodipicolinate (succinylase route): step 3/3. In terms of biological role, catalyzes the hydrolysis of N-succinyl-L,L-diaminopimelic acid (SDAP), forming succinate and LL-2,6-diaminopimelate (DAP), an intermediate involved in the bacterial biosynthesis of lysine and meso-diaminopimelic acid, an essential component of bacterial cell walls. In Helicobacter pylori (strain P12), this protein is Succinyl-diaminopimelate desuccinylase.